Here is a 233-residue protein sequence, read N- to C-terminus: Uracil-DNA glycosylase (233 aa).

Asp-70 functions as the Proton acceptor in the catalytic mechanism.

Belongs to the uracil-DNA glycosylase (UDG) superfamily. UNG family.

It localises to the cytoplasm. It carries out the reaction Hydrolyzes single-stranded DNA or mismatched double-stranded DNA and polynucleotides, releasing free uracil.. Its function is as follows. Excises uracil residues from the DNA which can arise as a result of misincorporation of dUMP residues by DNA polymerase or due to deamination of cytosine. This chain is Uracil-DNA glycosylase, found in Helicobacter acinonychis (strain Sheeba).